Here is a 148-residue protein sequence, read N- to C-terminus: Large ribosomal subunit protein bL9 (148 aa).

The protein belongs to the bacterial ribosomal protein bL9 family.

Its function is as follows. Binds to the 23S rRNA. The protein is Large ribosomal subunit protein bL9 of Bacillus cereus (strain ATCC 10987 / NRS 248).